The primary structure comprises 311 residues: tRNA-cytidine(32) 2-sulfurtransferase (311 aa).

Positions 47-52 match the PP-loop motif motif; the sequence is SGGKDS. Residues Cys122, Cys125, and Cys213 each coordinate [4Fe-4S] cluster.

This sequence belongs to the TtcA family. Homodimer. Mg(2+) is required as a cofactor. [4Fe-4S] cluster serves as cofactor.

Its subcellular location is the cytoplasm. The enzyme catalyses cytidine(32) in tRNA + S-sulfanyl-L-cysteinyl-[cysteine desulfurase] + AH2 + ATP = 2-thiocytidine(32) in tRNA + L-cysteinyl-[cysteine desulfurase] + A + AMP + diphosphate + H(+). It functions in the pathway tRNA modification. In terms of biological role, catalyzes the ATP-dependent 2-thiolation of cytidine in position 32 of tRNA, to form 2-thiocytidine (s(2)C32). The sulfur atoms are provided by the cysteine/cysteine desulfurase (IscS) system. This is tRNA-cytidine(32) 2-sulfurtransferase from Shigella dysenteriae serotype 1 (strain Sd197).